The chain runs to 146 residues: DNA-binding protein Rv2175c (146 aa).

Residues 1 to 27 form a disordered region; that stretch reads MPGRAPGSTLARVGSIPAGDDVLDPDE. The residue at position 9 (Thr9) is a Phosphothreonine.

Monomer in solution. May form homodimers. Interacts with phosphorylated PknL. Phosphorylated by PknL. Phosphorylation negatively regulates DNA-binding activity.

In terms of biological role, binds DNA at low salt concentrations. This chain is DNA-binding protein Rv2175c, found in Mycobacterium tuberculosis (strain ATCC 25618 / H37Rv).